The following is a 191-amino-acid chain: Imidazoleglycerol-phosphate dehydratase (191 aa).

It belongs to the imidazoleglycerol-phosphate dehydratase family.

It is found in the cytoplasm. It catalyses the reaction D-erythro-1-(imidazol-4-yl)glycerol 3-phosphate = 3-(imidazol-4-yl)-2-oxopropyl phosphate + H2O. It participates in amino-acid biosynthesis; L-histidine biosynthesis; L-histidine from 5-phospho-alpha-D-ribose 1-diphosphate: step 6/9. The polypeptide is Imidazoleglycerol-phosphate dehydratase (Thermodesulfovibrio yellowstonii (strain ATCC 51303 / DSM 11347 / YP87)).